We begin with the raw amino-acid sequence, 197 residues long: 3-isopropylmalate dehydratase small subunit (197 aa).

It belongs to the LeuD family. LeuD type 1 subfamily. As to quaternary structure, heterodimer of LeuC and LeuD.

The catalysed reaction is (2R,3S)-3-isopropylmalate = (2S)-2-isopropylmalate. Its pathway is amino-acid biosynthesis; L-leucine biosynthesis; L-leucine from 3-methyl-2-oxobutanoate: step 2/4. Catalyzes the isomerization between 2-isopropylmalate and 3-isopropylmalate, via the formation of 2-isopropylmaleate. The chain is 3-isopropylmalate dehydratase small subunit from Acidothermus cellulolyticus (strain ATCC 43068 / DSM 8971 / 11B).